Reading from the N-terminus, the 127-residue chain is Phosphoribosyl-AMP cyclohydrolase (127 aa).

Asp-96 contacts Mg(2+). Cys-97 provides a ligand contact to Zn(2+). Mg(2+) contacts are provided by Asp-98 and Asp-100. Residues Cys-113 and Cys-120 each coordinate Zn(2+).

This sequence belongs to the PRA-CH family. As to quaternary structure, homodimer. It depends on Mg(2+) as a cofactor. Zn(2+) is required as a cofactor.

Its subcellular location is the cytoplasm. The catalysed reaction is 1-(5-phospho-beta-D-ribosyl)-5'-AMP + H2O = 1-(5-phospho-beta-D-ribosyl)-5-[(5-phospho-beta-D-ribosylamino)methylideneamino]imidazole-4-carboxamide. The protein operates within amino-acid biosynthesis; L-histidine biosynthesis; L-histidine from 5-phospho-alpha-D-ribose 1-diphosphate: step 3/9. Its function is as follows. Catalyzes the hydrolysis of the adenine ring of phosphoribosyl-AMP. This Corynebacterium jeikeium (strain K411) protein is Phosphoribosyl-AMP cyclohydrolase.